The following is a 401-amino-acid chain: Argininosuccinate synthase (401 aa).

9–17 (AYSGGLDTS) contacts ATP. An L-citrulline-binding site is contributed by Y88. G118 contacts ATP. L-aspartate-binding residues include T120, N124, and D125. N124 is an L-citrulline binding site. Positions 128, 176, 185, 261, and 273 each coordinate L-citrulline.

The protein belongs to the argininosuccinate synthase family. Type 1 subfamily. As to quaternary structure, homotetramer.

The protein resides in the cytoplasm. The catalysed reaction is L-citrulline + L-aspartate + ATP = 2-(N(omega)-L-arginino)succinate + AMP + diphosphate + H(+). It participates in amino-acid biosynthesis; L-arginine biosynthesis; L-arginine from L-ornithine and carbamoyl phosphate: step 2/3. The protein is Argininosuccinate synthase of Symbiobacterium thermophilum (strain DSM 24528 / JCM 14929 / IAM 14863 / T).